A 240-amino-acid chain; its full sequence is Pyridoxine 5'-phosphate synthase (240 aa).

3-amino-2-oxopropyl phosphate is bound at residue asparagine 7. Residue 9-10 (DH) participates in 1-deoxy-D-xylulose 5-phosphate binding. Arginine 18 is a binding site for 3-amino-2-oxopropyl phosphate. Residue histidine 43 is the Proton acceptor of the active site. Residues arginine 45 and histidine 50 each coordinate 1-deoxy-D-xylulose 5-phosphate. Catalysis depends on glutamate 70, which acts as the Proton acceptor. Residue threonine 100 coordinates 1-deoxy-D-xylulose 5-phosphate. Histidine 191 serves as the catalytic Proton donor. 3-amino-2-oxopropyl phosphate is bound by residues glycine 192 and 213-214 (GH).

The protein belongs to the PNP synthase family. As to quaternary structure, homooctamer; tetramer of dimers.

The protein localises to the cytoplasm. The catalysed reaction is 3-amino-2-oxopropyl phosphate + 1-deoxy-D-xylulose 5-phosphate = pyridoxine 5'-phosphate + phosphate + 2 H2O + H(+). Its pathway is cofactor biosynthesis; pyridoxine 5'-phosphate biosynthesis; pyridoxine 5'-phosphate from D-erythrose 4-phosphate: step 5/5. Catalyzes the complicated ring closure reaction between the two acyclic compounds 1-deoxy-D-xylulose-5-phosphate (DXP) and 3-amino-2-oxopropyl phosphate (1-amino-acetone-3-phosphate or AAP) to form pyridoxine 5'-phosphate (PNP) and inorganic phosphate. The polypeptide is Pyridoxine 5'-phosphate synthase (Gloeothece citriformis (strain PCC 7424) (Cyanothece sp. (strain PCC 7424))).